The sequence spans 274 residues: NAD kinase (274 aa).

Asp-61 acts as the Proton acceptor in catalysis. Residues Asp-61–Gly-62, Lys-66, Asn-134–Asp-135, Lys-145, Asp-164, and Thr-175–Ser-180 contribute to the NAD(+) site.

This sequence belongs to the NAD kinase family. It depends on a divalent metal cation as a cofactor.

The protein resides in the cytoplasm. It carries out the reaction NAD(+) + ATP = ADP + NADP(+) + H(+). Functionally, involved in the regulation of the intracellular balance of NAD and NADP, and is a key enzyme in the biosynthesis of NADP. Catalyzes specifically the phosphorylation on 2'-hydroxyl of the adenosine moiety of NAD to yield NADP. This Clostridium tetani (strain Massachusetts / E88) protein is NAD kinase.